Here is a 295-residue protein sequence, read N- to C-terminus: bZIP transcription factor 60 (295 aa).

The interval 101–154 (PAAADDSGKENSDLVVEKKSNDSGSEIHDDDDEEGDDDAVAKKRRRRVRNRDAA) is disordered. Residues 106–127 (DSGKENSDLVVEKKSNDSGSEI) are compositionally biased toward basic and acidic residues. Residues 128-138 (HDDDDEEGDDD) show a composition bias toward acidic residues. The 64-residue stretch at 140 to 203 (VAKKRRRRVR…QSLRYCLQKG (64 aa)) folds into the bZIP domain. Residues 142-162 (KKRRRRVRNRDAAVRSRERKK) form a basic motif region. The tract at residues 168-182 (LEKKSKYLERECLRL) is leucine-zipper. A helical membrane pass occupies residues 224-244 (LLLGSLLWLLGVNFICLFPYM).

Belongs to the bZIP family. As to quaternary structure, interacts with BZIP28. In terms of tissue distribution, expressed in seedlings, rosette and cauline leaves, stems, buds, flowers, siliques, immature seeds, anthers and pollen grains.

The protein resides in the endoplasmic reticulum membrane. It localises to the nucleus. Transcription factor involved in the unfolded protein response (UPR). Acts during endoplasmic reticulum stress (ER) by activating unfolded protein response (UPR) target genes via direct binding to the UPR element (UPRE). Plays a role in plant immunity and abiotic stress responses. This chain is bZIP transcription factor 60, found in Arabidopsis thaliana (Mouse-ear cress).